The following is a 244-amino-acid chain: Probable 2-phosphosulfolactate phosphatase (244 aa).

The protein belongs to the ComB family. Requires Mg(2+) as cofactor.

It catalyses the reaction (2R)-O-phospho-3-sulfolactate + H2O = (2R)-3-sulfolactate + phosphate. The protein is Probable 2-phosphosulfolactate phosphatase of Cyanothece sp. (strain PCC 7425 / ATCC 29141).